A 418-amino-acid polypeptide reads, in one-letter code: Probable aminotransferase Rv1178 (418 aa).

Positions 22–42 are disordered; sequence GQGWHDRERPASGQGSGAAER.

The protein belongs to the class-I pyridoxal-phosphate-dependent aminotransferase family. Pyridoxal 5'-phosphate serves as cofactor.

The polypeptide is Probable aminotransferase Rv1178 (Mycobacterium tuberculosis (strain ATCC 25618 / H37Rv)).